Reading from the N-terminus, the 869-residue chain is Eukaryotic translation initiation factor 3 subunit C (869 aa).

Disordered stretches follow at residues 1 to 92 (MSRF…KSAK) and 182 to 242 (IKKA…VGKG). Acidic residues predominate over residues 14–55 (SSDEEEDLYSDDEEVQEQPEEESSEDDSEEDDDDDDDSDSSS). Residues 185 to 203 (ASKEHQKDIDSFRADKDAY) show a composition bias toward basic and acidic residues. Positions 607–781 (FHMHINLELL…SSIIFRKGVE (175 aa)) constitute a PCI domain. The disordered stretch occupies residues 803–869 (NERTLETRTQ…ALGAAVGSRA (67 aa)). Residues 823–843 (GRGGRGGNRGGRGGGRGGRGG) show a composition bias toward gly residues.

The protein belongs to the eIF-3 subunit C family. Component of the eukaryotic translation initiation factor 3 (eIF-3) complex.

The protein resides in the cytoplasm. In terms of biological role, component of the eukaryotic translation initiation factor 3 (eIF-3) complex, which is involved in protein synthesis of a specialized repertoire of mRNAs and, together with other initiation factors, stimulates binding of mRNA and methionyl-tRNAi to the 40S ribosome. The eIF-3 complex specifically targets and initiates translation of a subset of mRNAs involved in cell proliferation. The sequence is that of Eukaryotic translation initiation factor 3 subunit C (nip1) from Botryotinia fuckeliana (strain B05.10) (Noble rot fungus).